The sequence spans 504 residues: Maturase K (504 aa).

The protein belongs to the intron maturase 2 family. MatK subfamily.

It is found in the plastid. The protein resides in the chloroplast. Functionally, usually encoded in the trnK tRNA gene intron. Probably assists in splicing its own and other chloroplast group II introns. This is Maturase K from Vauquelinia californica (Arizona rosewood).